Here is a 142-residue protein sequence, read N- to C-terminus: Hemoglobin subunit alpha (142 aa).

The region spanning 2-142 (VLSSADKNNV…VSTVLTSKYR (141 aa)) is the Globin domain. Ser4 is subject to Phosphoserine. N6-succinyllysine occurs at positions 8 and 12. Lys17 carries the N6-acetyllysine; alternate modification. Lys17 carries the N6-succinyllysine; alternate modification. Tyr25 is modified (phosphotyrosine). Phosphoserine is present on Ser36. Lys41 bears the N6-succinyllysine mark. At Ser50 the chain carries Phosphoserine. Residue His59 participates in O2 binding. Residue His88 participates in heme b binding. Position 103 is a phosphoserine (Ser103). At Thr109 the chain carries Phosphothreonine. Phosphoserine is present on Ser125. Residues Thr135 and Thr138 each carry the phosphothreonine modification. At Ser139 the chain carries Phosphoserine.

Belongs to the globin family. In terms of assembly, heterotetramer of two alpha chains and two beta chains. In terms of tissue distribution, red blood cells.

In terms of biological role, involved in oxygen transport from the lung to the various peripheral tissues. Hemopressin acts as an antagonist peptide of the cannabinoid receptor CNR1. Hemopressin-binding efficiently blocks cannabinoid receptor CNR1 and subsequent signaling. This chain is Hemoglobin subunit alpha (HBA), found in Panthera leo (Lion).